A 140-amino-acid polypeptide reads, in one-letter code: Small ribosomal subunit protein uS12 (140 aa).

Aspartate 102 bears the 3-methylthioaspartic acid mark.

This sequence belongs to the universal ribosomal protein uS12 family. Part of the 30S ribosomal subunit. Contacts proteins S8 and S17. May interact with IF1 in the 30S initiation complex.

Its function is as follows. With S4 and S5 plays an important role in translational accuracy. In terms of biological role, interacts with and stabilizes bases of the 16S rRNA that are involved in tRNA selection in the A site and with the mRNA backbone. Located at the interface of the 30S and 50S subunits, it traverses the body of the 30S subunit contacting proteins on the other side and probably holding the rRNA structure together. The combined cluster of proteins S8, S12 and S17 appears to hold together the shoulder and platform of the 30S subunit. This is Small ribosomal subunit protein uS12 from Bacillus cytotoxicus (strain DSM 22905 / CIP 110041 / 391-98 / NVH 391-98).